Reading from the N-terminus, the 255-residue chain is Ribonuclease HII (255 aa).

The RNase H type-2 domain occupies 72–255 (AIICGIDEVG…KSFEPIKSLL (184 aa)). Positions 78, 79, and 170 each coordinate a divalent metal cation.

The protein belongs to the RNase HII family. The cofactor is Mn(2+). Requires Mg(2+) as cofactor.

It localises to the cytoplasm. It carries out the reaction Endonucleolytic cleavage to 5'-phosphomonoester.. Endonuclease that specifically degrades the RNA of RNA-DNA hybrids. The polypeptide is Ribonuclease HII (Staphylococcus aureus (strain MSSA476)).